Reading from the N-terminus, the 188-residue chain is Ribosome-recycling factor (188 aa).

This sequence belongs to the RRF family.

It is found in the cytoplasm. In terms of biological role, responsible for the release of ribosomes from messenger RNA at the termination of protein biosynthesis. May increase the efficiency of translation by recycling ribosomes from one round of translation to another. The polypeptide is Ribosome-recycling factor (Dinoroseobacter shibae (strain DSM 16493 / NCIMB 14021 / DFL 12)).